A 287-amino-acid chain; its full sequence is Small ribosomal subunit biogenesis GTPase RsgA (287 aa).

Positions 63-223 (KNLLIRPKVA…VIDTPGFGSL (161 aa)) constitute a CP-type G domain. GTP-binding positions include 113–116 (SKMD) and 166–174 (GQSGVGKST). Zn(2+) is bound by residues C246, C251, H253, and C259.

This sequence belongs to the TRAFAC class YlqF/YawG GTPase family. RsgA subfamily. As to quaternary structure, monomer. Associates with 30S ribosomal subunit, binds 16S rRNA. The cofactor is Zn(2+).

It is found in the cytoplasm. One of several proteins that assist in the late maturation steps of the functional core of the 30S ribosomal subunit. Helps release RbfA from mature subunits. May play a role in the assembly of ribosomal proteins into the subunit. Circularly permuted GTPase that catalyzes slow GTP hydrolysis, GTPase activity is stimulated by the 30S ribosomal subunit. The chain is Small ribosomal subunit biogenesis GTPase RsgA from Malacoplasma penetrans (strain HF-2) (Mycoplasma penetrans).